The chain runs to 140 residues: Acyl-coenzyme A thioesterase PaaI (140 aa).

Homotetramer.

It participates in aromatic compound metabolism; phenylacetate degradation. Functionally, thioesterase with a preference for ring-hydroxylated phenylacetyl-CoA esters. Hydrolyzes 3,4-dihydroxyphenylacetyl-CoA, 3-hydroxyphenylacetyl-CoA and 4-hydroxyphenylacetyl-CoA. Inactive towards 4-hydroxybenzoyl-CoA and 4-hydroxyphenacyl-CoA. The sequence is that of Acyl-coenzyme A thioesterase PaaI (paaI) from Escherichia coli (strain K12).